The chain runs to 206 residues: MKTNVISLDNQTVGEIELADEIFGVPVRGDILFRAVNWQLAKRQSGNHKTKTISEISGTTKKPFAQKGGGRARQGSLRSAQFRGGSTIFGPVVRSHAHDLPKKVRKLALKTALSAKVADGKLIVVDAASAGSPKTKDLAARLGKLGLSSVLFIDGAAVDGNFALASRNIPYVDVLPTQGANVYDILRRDTLVLTKDAVAALEARLK.

The segment at Lys49 to Arg73 is disordered.

This sequence belongs to the universal ribosomal protein uL4 family. As to quaternary structure, part of the 50S ribosomal subunit.

In terms of biological role, one of the primary rRNA binding proteins, this protein initially binds near the 5'-end of the 23S rRNA. It is important during the early stages of 50S assembly. It makes multiple contacts with different domains of the 23S rRNA in the assembled 50S subunit and ribosome. Its function is as follows. Forms part of the polypeptide exit tunnel. The chain is Large ribosomal subunit protein uL4 from Paramagnetospirillum magneticum (strain ATCC 700264 / AMB-1) (Magnetospirillum magneticum).